The following is a 212-amino-acid chain: External core antigen (212 aa).

The first 19 residues, 1–19, serve as a signal peptide directing secretion; that stretch reads MQLFHLCLIISCSCPTVQA. The segment at 25–27 is HBEAG; the sequence is GWL. The tract at residues 179–212 is disordered; sequence RQRGRTIRRRTPSPRRRRSQSPRRRRSQSRESQC. Over residues 180–205 the composition is skewed to basic residues; sequence QRGRTIRRRTPSPRRRRSQSPRRRRS. The stretch at 184–190 is one 1; half-length repeat; that stretch reads TIRRRTP. A 3 X 8 AA repeats of S-P-R-R-R-R-S-Q region spans residues 184 to 206; that stretch reads TIRRRTPSPRRRRSQSPRRRRSQ. The propeptide occupies 184–212; sequence TIRRRTPSPRRRRSQSPRRRRSQSRESQC. 2 consecutive repeat copies span residues 191–198 and 199–206.

It belongs to the orthohepadnavirus precore antigen family. In terms of assembly, homodimerizes. In terms of processing, phosphorylated. Cleaved by host furin.

It is found in the secreted. The protein resides in the host nucleus. May regulate immune response to the intracellular capsid in acting as a T-cell tolerogen, by having an immunoregulatory effect which prevents destruction of infected cells by cytotoxic T-cells. This immune regulation may predispose to chronicity during perinatal infections and prevent severe liver injury during adult infections. The polypeptide is External core antigen (Hepatitis B virus genotype D subtype ayw (isolate Australia/AustKW/1991) (HBV-D)).